A 450-amino-acid polypeptide reads, in one-letter code: Probable glycosidase CRR1 (450 aa).

The N-terminal stretch at 1-17 (MSKRIIQLILLSAFARA) is a signal peptide. A GH16 domain is found at 67–347 (SPESCVPVPA…WENAPDIKAH (281 aa)). Glu225 (nucleophile) is an active-site residue. The active-site Proton donor is Glu229. Residues 428–450 (AQRQQHHRRSLPHVEAPPITNTM) are disordered.

It belongs to the glycosyl hydrolase 16 family. CRR1 subfamily.

It is found in the spore wall. In terms of biological role, spore specific glycosidase involved in spore wall assembly during sporulation. May be involved in copper import. This chain is Probable glycosidase CRR1 (CRR1), found in Eremothecium gossypii (strain ATCC 10895 / CBS 109.51 / FGSC 9923 / NRRL Y-1056) (Yeast).